A 432-amino-acid polypeptide reads, in one-letter code: Adenylosuccinate synthetase (432 aa).

Residues 13–19 (GDEGKGK) and 41–43 (GHT) each bind GTP. Asp-14 serves as the catalytic Proton acceptor. Mg(2+) contacts are provided by Asp-14 and Gly-41. IMP is bound by residues 14–17 (DEGK), 39–42 (NAGH), Thr-130, Arg-144, Gln-225, Thr-240, and Arg-304. Residue His-42 is the Proton donor of the active site. 300–306 (ATTGRKR) contributes to the substrate binding site. GTP contacts are provided by residues Arg-306, 332–334 (KLD), and 415–417 (STG).

The protein belongs to the adenylosuccinate synthetase family. Homodimer. Requires Mg(2+) as cofactor.

The protein localises to the cytoplasm. It catalyses the reaction IMP + L-aspartate + GTP = N(6)-(1,2-dicarboxyethyl)-AMP + GDP + phosphate + 2 H(+). The protein operates within purine metabolism; AMP biosynthesis via de novo pathway; AMP from IMP: step 1/2. Plays an important role in the de novo pathway of purine nucleotide biosynthesis. Catalyzes the first committed step in the biosynthesis of AMP from IMP. The protein is Adenylosuccinate synthetase of Pseudoalteromonas atlantica (strain T6c / ATCC BAA-1087).